Reading from the N-terminus, the 337-residue chain is Adenylosuccinate synthetase (337 aa).

GTP is bound by residues 12–18 and 42–44; these read GDEGKGK and GHT. Catalysis depends on Asp13, which acts as the Proton acceptor. Residues Asp13 and Gly42 each contribute to the Mg(2+) site. IMP is bound by residues 13–16, 40–43, Thr127, Arg141, Gln179, Thr194, and Arg256; these read DEGK and NAGH. The active-site Proton donor is the His43. Substrate is bound at residue 252–258; it reads TVTGRRR. Residues Arg258, 284–286, and 324–326 each bind GTP; these read CLD and STG.

It belongs to the adenylosuccinate synthetase family. Homodimer. Mg(2+) serves as cofactor.

It localises to the cytoplasm. The catalysed reaction is IMP + L-aspartate + GTP = N(6)-(1,2-dicarboxyethyl)-AMP + GDP + phosphate + 2 H(+). It functions in the pathway purine metabolism; AMP biosynthesis via de novo pathway; AMP from IMP: step 1/2. Plays an important role in the de novo pathway of purine nucleotide biosynthesis. Catalyzes the first committed step in the biosynthesis of AMP from IMP. This Methanococcus maripaludis (strain C5 / ATCC BAA-1333) protein is Adenylosuccinate synthetase.